The chain runs to 20 residues: Venom protease (20 aa).

The protein belongs to the peptidase S1 family. In terms of processing, contains 3 disulfide bonds. Post-translationally, N-glycosylated. In terms of tissue distribution, expressed by the venom duct.

It is found in the secreted. This is Venom protease from Bombus terrestris (Buff-tailed bumblebee).